A 91-amino-acid chain; its full sequence is Acylphosphatase (91 aa).

The Acylphosphatase-like domain occupies 3 to 91; the sequence is TVTMRVTGLV…EKFTRFSVVY (89 aa). Active-site residues include Arg18 and Asn36.

Belongs to the acylphosphatase family.

It carries out the reaction an acyl phosphate + H2O = a carboxylate + phosphate + H(+). In Lactobacillus johnsonii (strain CNCM I-12250 / La1 / NCC 533), this protein is Acylphosphatase (acyP).